Consider the following 212-residue polypeptide: Putative aryl-alcohol dehydrogenase AAD6 (212 aa).

Catalysis depends on Tyr-76, which acts as the Proton donor.

This sequence belongs to the aldo/keto reductase family. Aldo/keto reductase 2 subfamily.

This is Putative aryl-alcohol dehydrogenase AAD6 from Saccharomyces cerevisiae (strain ATCC 204508 / S288c) (Baker's yeast).